A 1269-amino-acid polypeptide reads, in one-letter code: Myb-binding protein 1A-like protein (1269 aa).

The disordered stretch occupies residues 708–783 (DPNKDEDESG…EEDEAMEEGQ (76 aa)). Basic and acidic residues predominate over residues 721–730 (TDDKKRKLKE). Residues 731 to 783 (EDEDDDDEEEDDDNDEGDDDDDDDDEEEGGEEGEESSDSSDDEEEDEAMEEGQ) show a composition bias toward acidic residues. At Ser-810 the chain carries Phosphoserine. A disordered region spans residues 1163–1269 (VKKVPEAEQT…KKKKKGADGE (107 aa)). The span at 1177 to 1195 (KKKKGFLPETKKRKNRKKP) shows a compositional bias: basic residues. Positions 1199–1211 (EGKETETPVEKTP) are enriched in basic and acidic residues. 2 stretches are compositionally biased toward basic residues: residues 1221–1232 (NKNKKKNKKRKQ) and 1256–1269 (KQKK…ADGE).

Belongs to the MYBBP1A family.

It is found in the nucleus. It localises to the nucleolus. In terms of biological role, may activate or repress transcription via interactions with sequence specific DNA-binding proteins. May play a role in the repression of the circadian clock gene expression. In Danio rerio (Zebrafish), this protein is Myb-binding protein 1A-like protein (mybbp1a).